The sequence spans 127 residues: MNIPEDLRYTKDHEWVKLLDDGSTALAGITDFAQSELGDIVFVELKAPGTKLKAHEVFGTVEAVKTVADLFAPIAGELVGINEALDAAEVVNTDPYGEGWLVKIKVDDAKAVEELLDAASYRQLIGA.

The region spanning 24-105 (TALAGITDFA…YGEGWLVKIK (82 aa)) is the Lipoyl-binding domain. Residue lysine 65 is modified to N6-lipoyllysine.

It belongs to the GcvH family. In terms of assembly, the glycine cleavage system is composed of four proteins: P, T, L and H. It depends on (R)-lipoate as a cofactor.

Its function is as follows. The glycine cleavage system catalyzes the degradation of glycine. The H protein shuttles the methylamine group of glycine from the P protein to the T protein. This is Glycine cleavage system H protein from Chlorobium phaeobacteroides (strain DSM 266 / SMG 266 / 2430).